The sequence spans 1813 residues: U3 small nucleolar RNA-associated protein 10 (1813 aa).

HEAT repeat units lie at residues 245 to 283, 389 to 427, 428 to 464, 584 to 621, and 659 to 695; these read DVLI…KASL, SETI…LQFN, ESDT…DIMP, ADMQ…LASK, and IIHH…QDDS. Disordered regions lie at residues 686–705 and 887–912; these read IRGP…STGV and DLGS…SSMD. Residues 690 to 705 are compositionally biased toward basic and acidic residues; that stretch reads RSQDDSDRTRSESTGV. HEAT repeat units follow at residues 1058 to 1095, 1189 to 1228, 1265 to 1302, 1309 to 1347, 1398 to 1437, 1678 to 1715, and 1769 to 1806; these read QTID…AFEH, KIAV…KAHG, LSLV…SSND, ARVL…KYGK, EALP…HVPW, LASI…LAVA, and ALLP…ILGE.

Belongs to the HEATR1/UTP10 family. In terms of assembly, component of the ribosomal small subunit (SSU) processome.

It localises to the nucleus. The protein resides in the nucleolus. Functionally, involved in nucleolar processing of pre-18S ribosomal RNA. Involved in ribosome biosynthesis. The chain is U3 small nucleolar RNA-associated protein 10 from Coccidioides immitis (strain RS) (Valley fever fungus).